Here is a 387-residue protein sequence, read N- to C-terminus: Protein REVEILLE 1 (387 aa).

2 stretches are compositionally biased toward polar residues: residues 1–17 (MASSPLTANVQGTNASL) and 27–37 (KQIQFNDQSFG). The disordered stretch occupies residues 1-44 (MASSPLTANVQGTNASLRNRDEETADKQIQFNDQSFGGNDYAPK). Residues 50-104 (TITKERERWTDEEHKKFVEALKLYGRAWRRIEEHVGSKTAVQIRSHAQKFFSKVA) form the HTH myb-type domain. A DNA-binding region (H-T-H motif) is located at residues 77 to 100 (WRRIEEHVGSKTAVQIRSHAQKFF). 3 disordered regions span residues 105-200 (REAT…TANA), 306-334 (KAVQNEGSSTGSNTGSVDDTGHTEKTTEP), and 350-387 (AFSELRRTNSESNSRGFGPYKKRKMVTEEEEHEIHLHL). A compositionally biased stretch (basic residues) spans 124-134 (RPKRKPAHPYP). Residues 141 to 166 (ADQTSRSVSPSERDTQSPTSVLSTVG) show a composition bias toward polar residues. Composition is skewed to low complexity over residues 172 to 200 (SLDSSSPNRSLSPVSSASPPAALTTTANA) and 312 to 323 (GSSTGSNTGSVD). The segment covering 324–333 (DTGHTEKTTE) has biased composition (basic and acidic residues).

Its subcellular location is the nucleus. Morning-phased transcription factor integrating the circadian clock and auxin pathways. Binds to the evening element (EE) of promoters. Does not act within the central clock, but regulates free auxin levels in a time-of-day specific manner. Positively regulates the expression of YUC8 during the day, but has no effect during the night. Negative regulator of freezing tolerance. This chain is Protein REVEILLE 1 (RVE1), found in Arabidopsis thaliana (Mouse-ear cress).